Here is a 406-residue protein sequence, read N- to C-terminus: MTTPANAQNASKTWELSLYELHRTPQEAIMDGTEIAVSPRSLHSELMCPICLDMLKNTMTTKECLHRFCSDCIVTALRSGNKECPTCRKKLVSKRSLRPDPNFDALISKIYPSREEYEAHQDRVLIRLSRLHNQQALSSSIEEGLRMQAMHRAQRVRRPMPGSDQTATMSGGEGEPGEGEGDGEDVSSDSAPDSAPGPAPKRPRGAGAGASSVGTGGGAAGGACGGAGSEDSGDRGGTLGGGTLGPPSPPGAPSPPEPGGEIELVFRPHPLLVEKGEYCQTRYVKTTGNATVDHLSKYLALRIALERRQQQETTEPGGPGGGASDTGGPDGGGGERGVAGGGEGPEEPALPSLEGVSEKQYTIYIAPGGGAFTTLNGSLTLELVNEKFWKVSRPLELCYAPTKDPK.

A Phosphothreonine modification is found at Thr-24. The interval 30–234 (MDGTEIAVSP…GGAGSEDSGD (205 aa)) is necessary for transcriptional repression. Ser-38 is modified (phosphoserine). The segment at 48–88 (CPICLDMLKNTMTTKECLHRFCSDCIVTALRSGNKECPTCR) adopts an RING-type zinc-finger fold. 3 positions are modified to phosphoserine: Ser-140, Ser-187, and Ser-190. Disordered regions lie at residues 151 to 263 (HRAQ…GEIE) and 309 to 354 (QQQE…PSLE). Acidic residues predominate over residues 175-187 (EPGEGEGDGEDVS). Residues 201–204 (KRPR) carry the Nuclear localization signal motif. The segment covering 214–228 (GTGGGAAGGACGGAG) has biased composition (gly residues). Thr-215 carries the post-translational modification Phosphothreonine. A phosphoserine mark is found at Ser-229 and Ser-232. Positions 230 to 406 (EDSGDRGGTL…LCYAPTKDPK (177 aa)) are necessary for interaction with CBX2. The segment covering 235–244 (RGGTLGGGTL) has biased composition (gly residues). Residues 246–258 (PPSPPGAPSPPEP) are compositionally biased toward pro residues. 2 positions are modified to phosphoserine: Ser-248 and Ser-254. Over residues 317–343 (GGPGGGASDTGGPDGGGGERGVAGGGE) the composition is skewed to gly residues.

Component of chromatin-associated Polycomb (PcG) complexes. Part of the E2F6.com-1 complex in G0 phase composed of E2F6, MGA, MAX, TFDP1, CBX3, BAT8, EUHMTASE1, RING1, RNF2/RING2 MBLR, L3MBTL2 and YAF2. Interacts with CBX2 and PCGF6. Component of a PRC1-like complex. Component of repressive BCOR complex containing Polycomb group subcomplex at least composed of RYBP, PCGF1, BCOR and RNF2/RING2. Interacts with PHC2, PCGF2, RNF2; CBX6, CBX7 and CBX8. Interacts with BMI1. Interacts with MN1. Interacts with USP26.

The protein resides in the nucleus speckle. The catalysed reaction is S-ubiquitinyl-[E2 ubiquitin-conjugating enzyme]-L-cysteine + [acceptor protein]-L-lysine = [E2 ubiquitin-conjugating enzyme]-L-cysteine + N(6)-ubiquitinyl-[acceptor protein]-L-lysine.. It functions in the pathway protein modification; protein ubiquitination. Functionally, constitutes one of the E3 ubiquitin-protein ligases that mediate monoubiquitination of 'Lys-119' of histone H2A, thereby playing a central role in histone code and gene regulation. H2A 'Lys-119' ubiquitination gives a specific tag for epigenetic transcriptional repression and participates in X chromosome inactivation of female mammals. Essential component of a Polycomb group (PcG) multiprotein PRC1-like complex, a complex class required to maintain the transcriptionally repressive state of many genes, including Hox genes, throughout development. PcG PRC1 complex acts via chromatin remodeling and modification of histones, rendering chromatin heritably changed in its expressibility. Compared to RNF2/RING2, it does not have the main E3 ubiquitin ligase activity on histone H2A, and it may rather act as a modulator of RNF2/RING2 activity. In Mus musculus (Mouse), this protein is E3 ubiquitin-protein ligase RING1.